Consider the following 328-residue polypeptide: Ubiquitin carboxyl-terminal hydrolase isozyme L5 (328 aa).

The UCH catalytic domain occupies 7–225; the sequence is EWCLMESDPG…IRFNLMAIVS (219 aa). Lys47 carries the N6-succinyllysine modification. The Nucleophile role is filled by Cys88. Position 158 is an N6-acetyllysine (Lys158). His164 (proton donor) is an active-site residue. Lys288 is modified (N6-succinyllysine). One can recognise a ULD domain in the interval 290-318; sequence NYLPFIMELLKTLAEHQQLIPLVEKAKEK. Positions 312 to 328 are interaction with ADRM1; the sequence is VEKAKEKQNAKKAQETK.

This sequence belongs to the peptidase C12 family. As to quaternary structure, component of the 19S (PA700) regulatory complex of the 26S proteasome. Interacts with ADRM1 and NFRKB. Component of the INO80 complex; specifically part of a complex module associated with N-terminus of INO80.

It is found in the cytoplasm. Its subcellular location is the nucleus. The catalysed reaction is Thiol-dependent hydrolysis of ester, thioester, amide, peptide and isopeptide bonds formed by the C-terminal Gly of ubiquitin (a 76-residue protein attached to proteins as an intracellular targeting signal).. With respect to regulation, activated by ADRM1. Inhibited by interaction with NFRKB. Protease that specifically cleaves 'Lys-48'-linked polyubiquitin chains. Deubiquitinating enzyme associated with the 19S regulatory subunit of the 26S proteasome. Putative regulatory component of the INO80 complex; however is inactive in the INO80 complex and is activated by a transient interaction of the INO80 complex with the proteasome via ADRM1. The protein is Ubiquitin carboxyl-terminal hydrolase isozyme L5 (UCHL5) of Bos taurus (Bovine).